An 86-amino-acid polypeptide reads, in one-letter code: Small ribosomal subunit protein bS16 (86 aa).

Belongs to the bacterial ribosomal protein bS16 family.

The polypeptide is Small ribosomal subunit protein bS16 (Syntrophotalea carbinolica (strain DSM 2380 / NBRC 103641 / GraBd1) (Pelobacter carbinolicus)).